A 237-amino-acid polypeptide reads, in one-letter code: Proteasome subunit alpha type-5-B (237 aa).

The residue at position 1 (Met-1) is an N-acetylmethionine. Glycyl lysine isopeptide (Lys-Gly) (interchain with G-Cter in ubiquitin) cross-links involve residues Lys-43, Lys-66, and Lys-185.

It belongs to the peptidase T1A family. In terms of assembly, component of the 20S core complex of the 26S proteasome. The 26S proteasome is composed of a core protease (CP), known as the 20S proteasome, capped at one or both ends by the 19S regulatory particle (RP/PA700). The 20S proteasome core is composed of 28 subunits that are arranged in four stacked rings, resulting in a barrel-shaped structure. The two end rings are each formed by seven alpha subunits, and the two central rings are each formed by seven beta subunits. The catalytic chamber with the active sites is on the inside of the barrel.

The protein resides in the cytoplasm. It localises to the nucleus. Its function is as follows. The proteasome is a multicatalytic proteinase complex which is characterized by its ability to cleave peptides with Arg, Phe, Tyr, Leu, and Glu adjacent to the leaving group at neutral or slightly basic pH. The proteasome has an ATP-dependent proteolytic activity. This chain is Proteasome subunit alpha type-5-B (PAE2), found in Arabidopsis thaliana (Mouse-ear cress).